A 448-amino-acid chain; its full sequence is Chromosomal replication initiator protein DnaA (448 aa).

Residues 1-85 (MHDNLPQIWE…EVHIVVPSEE (85 aa)) form a domain I, interacts with DnaA modulators region. Residues 85-110 (ERVGDTQNINARRSNAQSPIMGNSPL) form a domain II region. A domain III, AAA+ region region spans residues 111–327 (ILNPKYTFDT…GALIRIVAYS (217 aa)). The ATP site is built by Gly155, Gly157, Lys158, and Thr159. Residues 328–448 (SLTNSEVTVE…DAIIKELKSD (121 aa)) are domain IV, binds dsDNA.

It belongs to the DnaA family. Oligomerizes as a right-handed, spiral filament on DNA at oriC.

The protein resides in the cytoplasm. Plays an essential role in the initiation and regulation of chromosomal replication. ATP-DnaA binds to the origin of replication (oriC) to initiate formation of the DNA replication initiation complex once per cell cycle. Binds the DnaA box (a 9 base pair repeat at the origin) and separates the double-stranded (ds)DNA. Forms a right-handed helical filament on oriC DNA; dsDNA binds to the exterior of the filament while single-stranded (ss)DNA is stabiized in the filament's interior. The ATP-DnaA-oriC complex binds and stabilizes one strand of the AT-rich DNA unwinding element (DUE), permitting loading of DNA polymerase. After initiation quickly degrades to an ADP-DnaA complex that is not apt for DNA replication. Binds acidic phospholipids. The protein is Chromosomal replication initiator protein DnaA of Alkaliphilus metalliredigens (strain QYMF).